We begin with the raw amino-acid sequence, 31 residues long: Phospholipase A2 homolog P-elapitoxin-Aa1a beta chain (31 aa).

This sequence belongs to the phospholipase A2 family. Group I subfamily. Heterotrimer of alpha, beta and gamma chains, each related to PLA2. Expressed by the venom gland.

It is found in the secreted. Functionally, heterotrimer: Snake venom phospholipase A2 (PLA2) that has presynaptic neurotoxicity. Inhibits nerve-evoked twitch contractions but not responses to cholinergic agonists acetylcholine and carbachol and to depolarizing agonist KCl. Causes a fade in tetanic contractions. Displays a triphasic mode of action with depression, enhancement and blockade of neurotransmission. Does not display myotoxic activity such as changes in baseline muscle tension or inhibition of directly stimulated muscle twitches. All subunits are necessary for maximum toxicity. In terms of biological role, monomer: The beta chain has no enzymatic activity and is not toxic by itself. This Acanthophis antarcticus (Common death adder) protein is Phospholipase A2 homolog P-elapitoxin-Aa1a beta chain.